The chain runs to 107 residues: Large ribosomal subunit protein P1 (107 aa).

A compositionally biased stretch (low complexity) spans 67 to 82; that stretch reads GPASAAPAGAAGAAAP. Residues 67-107 are disordered; that stretch reads GPASAAPAGAAGAAAPAEEKAEEKEEEKEESDEDMGFGLFD. Over residues 90 to 101 the composition is skewed to acidic residues; that stretch reads KEEEKEESDEDM.

This sequence belongs to the eukaryotic ribosomal protein P1/P2 family. In terms of assembly, P1 and P2 exist as dimers at the large ribosomal subunit.

Its subcellular location is the cytoplasm. Functionally, plays an important role in the elongation step of protein synthesis. This is Large ribosomal subunit protein P1 from Penicillium crustosum (Blue mold fungus).